We begin with the raw amino-acid sequence, 99 residues long: DNA-directed RNA polymerase subunit omega (99 aa).

This sequence belongs to the RNA polymerase subunit omega family. As to quaternary structure, the RNAP catalytic core consists of 2 alpha, 1 beta, 1 beta' and 1 omega subunit. When a sigma factor is associated with the core the holoenzyme is formed, which can initiate transcription.

The enzyme catalyses RNA(n) + a ribonucleoside 5'-triphosphate = RNA(n+1) + diphosphate. Its function is as follows. Promotes RNA polymerase assembly. Latches the N- and C-terminal regions of the beta' subunit thereby facilitating its interaction with the beta and alpha subunits. The sequence is that of DNA-directed RNA polymerase subunit omega from Xylella fastidiosa (strain Temecula1 / ATCC 700964).